The primary structure comprises 325 residues: uncharacterized protein (325 aa).

Residues 1–75 are disordered; the sequence is MSQPPEHPGN…PPPGYPTHLQ (75 aa). A compositionally biased stretch (pro residues) spans 24-70; that stretch reads YPPPGYGAPPPPPGYGPPPGTYLPPGYNAPPPPPGYGPPPGPPPPGY. Transmembrane regions (helical) follow at residues 96 to 116, 153 to 173, 205 to 225, and 273 to 293; these read AVTL…VIGA, IVMF…HAGI, LLIV…GLIF, and LVGE…AALI.

The protein localises to the cell membrane. This is an uncharacterized protein from Mycobacterium tuberculosis (strain ATCC 25618 / H37Rv).